We begin with the raw amino-acid sequence, 166 residues long: Short form salivary protein D7R1 (166 aa).

A signal peptide spans 1–21 (MFRKVFSVALVTCGLLVIVQA).

The protein belongs to the PBP/GOBP family. Interacts with host coagulation factor XII (F12) (inactive and activated) (via amino acids 1-77). Interacts with host high molecular weight kininogen (KNG1) (via amino acids 402-532). Female salivary gland (at protein level).

Its subcellular location is the secreted. With respect to regulation, zn(2+) modulates binding to host coagulation factor XII (F12) and high molecular weight kininogen (KNG1). Salivary protein with anticoagulant activity that targets the intrinsic blood coagulation pathway in the host. Inhibits activation of the host plasma contact system by preventing the reciprocal activation of host coagulation factor XII (F12) and prekallikrein (KLKB1). Attenuates generation of bradykinin in host plasma. May bind and sequester different mediators involved in the host response, such as serotonin and histamine. In Anopheles stephensi (Indo-Pakistan malaria mosquito), this protein is Short form salivary protein D7R1.